The sequence spans 256 residues: Geranylgeranylglyceryl phosphate synthase (256 aa).

Mg(2+)-binding residues include aspartate 28 and serine 53. Sn-glycerol 1-phosphate is bound by residues 172 to 178, 203 to 204, and 225 to 226; these read YLEAGSG, GG, and GT.

Belongs to the GGGP/HepGP synthase family. Group II subfamily. The cofactor is Mg(2+).

Its subcellular location is the cytoplasm. It carries out the reaction sn-glycerol 1-phosphate + (2E,6E,10E)-geranylgeranyl diphosphate = sn-3-O-(geranylgeranyl)glycerol 1-phosphate + diphosphate. Its pathway is membrane lipid metabolism; glycerophospholipid metabolism. In terms of biological role, prenyltransferase that catalyzes the transfer of the geranylgeranyl moiety of geranylgeranyl diphosphate (GGPP) to the C3 hydroxyl of sn-glycerol-1-phosphate (G1P). This reaction is the first ether-bond-formation step in the biosynthesis of archaeal membrane lipids. In Methanococcus maripaludis (strain C7 / ATCC BAA-1331), this protein is Geranylgeranylglyceryl phosphate synthase.